We begin with the raw amino-acid sequence, 226 residues long: MIQYLNVFFYDIYPYICATVFFLGSWLRYDYGQYTWRASSSQMLDKRGMVIWSNLFHIGILGIFFGHLFGMLTPHWMYAWFLPVAAKQLMAMVLGGICGVLTLIGGAGLLWRRLTNQRVRATSTTPDIIIMSILLIQCLLGLSTIPFSAQYPDGSEMMKLVGWAQSIVTFRGGSSEMLNGVAFVFRLHLVLGMTIFLLFPFTRLVHVWSAPFEYFTRRYQIVRSRR.

Residues 1–4 are Periplasmic-facing; it reads MIQY. The helical transmembrane segment at 5-30 threads the bilayer; sequence LNVFFYDIYPYICATVFFLGSWLRYD. At 31–48 the chain is on the cytoplasmic side; it reads YGQYTWRASSSQMLDKRG. A helical transmembrane segment spans residues 49-71; that stretch reads MVIWSNLFHIGILGIFFGHLFGM. The heme b site is built by H57 and H67. Residues 72–83 lie on the Periplasmic side of the membrane; the sequence is LTPHWMYAWFLP. Residues 84–113 form a helical membrane-spanning segment; the sequence is VAAKQLMAMVLGGICGVLTLIGGAGLLWRR. Over 114–125 the chain is Cytoplasmic; it reads LTNQRVRATSTT. A helical membrane pass occupies residues 126–149; the sequence is PDIIIMSILLIQCLLGLSTIPFSA. The Periplasmic segment spans residues 150-183; that stretch reads QYPDGSEMMKLVGWAQSIVTFRGGSSEMLNGVAF. A helical membrane pass occupies residues 184–199; the sequence is VFRLHLVLGMTIFLLF. Heme b contacts are provided by H188 and H206. At 200–226 the chain is on the cytoplasmic side; it reads PFTRLVHVWSAPFEYFTRRYQIVRSRR.

Dimer of heterotrimers each composed of an alpha, a beta and a gamma chain. Alpha and beta are catalytic chains; gamma chains are involved in binding the enzyme complex to the cytoplasmic membrane. It depends on heme as a cofactor.

Its subcellular location is the cell inner membrane. The catalysed reaction is nitrate + a quinol = a quinone + nitrite + H2O. In terms of biological role, this is a second nitrate reductase enzyme which can substitute for the NRA enzyme and allows E.coli to use nitrate as an electron acceptor during anaerobic growth. The gamma chain is a membrane-embedded heme-iron unit resembling cytochrome b, which transfers electrons from quinones to the beta subunit. The sequence is that of Respiratory nitrate reductase 2 gamma chain (narV) from Escherichia coli (strain K12).